Reading from the N-terminus, the 70-residue chain is Large ribosomal subunit protein eL38 (70 aa).

Belongs to the eukaryotic ribosomal protein eL38 family.

The chain is Large ribosomal subunit protein eL38 (RpL38) from Anopheles gambiae (African malaria mosquito).